A 200-amino-acid polypeptide reads, in one-letter code: NADH-quinone oxidoreductase subunit C (200 aa).

The protein belongs to the complex I 30 kDa subunit family. As to quaternary structure, NDH-1 is composed of 14 different subunits. Subunits NuoB, C, D, E, F, and G constitute the peripheral sector of the complex.

Its subcellular location is the cell inner membrane. It catalyses the reaction a quinone + NADH + 5 H(+)(in) = a quinol + NAD(+) + 4 H(+)(out). In terms of biological role, NDH-1 shuttles electrons from NADH, via FMN and iron-sulfur (Fe-S) centers, to quinones in the respiratory chain. The immediate electron acceptor for the enzyme in this species is believed to be ubiquinone. Couples the redox reaction to proton translocation (for every two electrons transferred, four hydrogen ions are translocated across the cytoplasmic membrane), and thus conserves the redox energy in a proton gradient. The sequence is that of NADH-quinone oxidoreductase subunit C from Parvibaculum lavamentivorans (strain DS-1 / DSM 13023 / NCIMB 13966).